We begin with the raw amino-acid sequence, 162 residues long: Small ribosomal subunit protein uS7m (162 aa).

This sequence belongs to the universal ribosomal protein uS7 family. Part of the small ribosomal subunit.

The protein localises to the mitochondrion. Functionally, one of the primary rRNA binding proteins, it binds directly to 16S-like rRNA where it nucleates assembly of the head domain of the small subunit. This is Small ribosomal subunit protein uS7m (mrps7) from Dictyostelium citrinum (Slime mold).